The primary structure comprises 231 residues: Cytidylate kinase (231 aa).

Position 18 to 26 (18 to 26 (GPSGTGKSS)) interacts with ATP.

Belongs to the cytidylate kinase family. Type 1 subfamily.

It localises to the cytoplasm. The catalysed reaction is CMP + ATP = CDP + ADP. It catalyses the reaction dCMP + ATP = dCDP + ADP. The protein is Cytidylate kinase of Streptomyces griseus subsp. griseus (strain JCM 4626 / CBS 651.72 / NBRC 13350 / KCC S-0626 / ISP 5235).